We begin with the raw amino-acid sequence, 403 residues long: Subtilisin-like protease CPC735_035780 (403 aa).

Residues 1 to 19 (MSIMKIATLFFAALSAVEA) form the signal peptide. A propeptide spanning residues 20-117 (AKLLTPSDKR…VEPDRRVHLT (98 aa)) is cleaved from the precursor. The 82-residue stretch at 35 to 116 (SYIVVMKDNV…YVEPDRRVHL (82 aa)) folds into the Inhibitor I9 domain. In terms of domain architecture, Peptidase S8 spans 127-403 (SWGLGRISHR…NKLLYNNSGR (277 aa)). Residues D159 and H190 each act as charge relay system in the active site. 2 N-linked (GlcNAc...) asparagine glycosylation sites follow: N233 and N251. S349 (charge relay system) is an active-site residue. N-linked (GlcNAc...) asparagine glycosylation occurs at N399.

Belongs to the peptidase S8 family.

The protein resides in the secreted. Secreted subtilisin-like serine protease with keratinolytic activity that contributes to pathogenicity. This Coccidioides posadasii (strain C735) (Valley fever fungus) protein is Subtilisin-like protease CPC735_035780.